A 1391-amino-acid chain; its full sequence is DNA-directed RNA polymerase subunit beta (1391 aa).

Belongs to the RNA polymerase beta chain family. The RNAP catalytic core consists of 2 alpha, 1 beta, 1 beta' and 1 omega subunit. When a sigma factor is associated with the core the holoenzyme is formed, which can initiate transcription.

The enzyme catalyses RNA(n) + a ribonucleoside 5'-triphosphate = RNA(n+1) + diphosphate. DNA-dependent RNA polymerase catalyzes the transcription of DNA into RNA using the four ribonucleoside triphosphates as substrates. In Mycoplasma pneumoniae (strain ATCC 29342 / M129 / Subtype 1) (Mycoplasmoides pneumoniae), this protein is DNA-directed RNA polymerase subunit beta.